The sequence spans 1152 residues: Alpha-mannosidase 2x (1152 aa).

Residues 1–5 (MKLKK) lie on the Cytoplasmic side of the membrane. Residues 6 to 26 (QVTVCGAAIFCVAVFSLYLML) traverse the membrane as a helical; Signal-anchor for type II membrane protein segment. Residues 27–796 (DRVQHDPARH…VDEEQEQQME (770 aa)) lie on the Lumenal side of the membrane. Residues 43–74 (PRSQISVLQNRIEQLEQLLEENHDIISRIKDS) are a coiled coil. Zn(2+)-binding residues include H175 and D177. An N-linked (GlcNAc...) asparagine glycan is attached at N225. A Zn(2+)-binding site is contributed by D289. D289 serves as the catalytic Nucleophile. N-linked (GlcNAc...) asparagine glycosylation occurs at N305. Residue H569 participates in Zn(2+) binding.

The protein belongs to the glycosyl hydrolase 38 family. Homodimer; disulfide-linked. Interacts with MGAT4D. The cofactor is Zn(2+).

It is found in the golgi apparatus membrane. It catalyses the reaction N(4)-{beta-D-GlcNAc-(1-&gt;2)-alpha-D-Man-(1-&gt;3)-[alpha-D-Man-(1-&gt;3)-[alpha-D-Man-(1-&gt;6)]-alpha-D-Man-(1-&gt;6)]-beta-D-Man-(1-&gt;4)-beta-D-GlcNAc-(1-&gt;4)-beta-D-GlcNAc}-L-asparaginyl-[protein] + 2 H2O = 2 alpha-D-mannopyranose + an N(4)-{beta-D-GlcNAc-(1-&gt;2)-alpha-D-Man-(1-&gt;3)-[alpha-D-Man-(1-&gt;6)]-beta-D-Man-(1-&gt;4)-beta-D-GlcNAc-(1-&gt;4)-beta-D-GlcNAc}-L-asparaginyl-[protein]. It participates in protein modification; protein glycosylation. Its function is as follows. Catalyzes the first committed step in the biosynthesis of complex N-glycans. It controls conversion of high mannose to complex N-glycans; the final hydrolytic step in the N-glycan maturation pathway. This Mus musculus (Mouse) protein is Alpha-mannosidase 2x (Man2a2).